Here is a 466-residue protein sequence, read N- to C-terminus: MGKTLYEKVYEAHVAVAAEGETPILYIDRHLVHEVTSPQAFDGLREKGRQVRQVSKTFATMDHNVSTTTKDINASGEMARIQMETLIKNCQEFGVTLYDINHKYQGIVHVMGPELGITLPGMTIVCGDSHTATHGAFGSLAFGIGTSEVEHVLATQTLKQARAKTMKIEVQGKVADGITAKDIVLAIIGKTTAAGGTGYVVEFCGEAITDLSMEGRMTVCNMAIELGAKAGLIAPDKTTFDYIKGRKFAPTGADWDAAVEYWKTLKTDEDAKFDAVVTLNAADIKPQVTWGTNPGQVIAVDEPIPAPESFSDPVEKASAEKALAYMGLEAGKSLSEYKVDKVFVGSCTNSRIEDMRAAAVVAKGRKVASHVQALIVPGSEQVKAQAEAEGLDVIFKEAGFEWRLPGCSMCLAMNNDRLGPHERCASTSNRNFEGRQGRDGRTHLVSPAMAAAAAIAGHFVDIRDWK.

The [4Fe-4S] cluster site is built by C347, C407, and C410.

It belongs to the aconitase/IPM isomerase family. LeuC type 1 subfamily. In terms of assembly, heterodimer of LeuC and LeuD. It depends on [4Fe-4S] cluster as a cofactor.

The catalysed reaction is (2R,3S)-3-isopropylmalate = (2S)-2-isopropylmalate. It participates in amino-acid biosynthesis; L-leucine biosynthesis; L-leucine from 3-methyl-2-oxobutanoate: step 2/4. In terms of biological role, catalyzes the isomerization between 2-isopropylmalate and 3-isopropylmalate, via the formation of 2-isopropylmaleate. The sequence is that of 3-isopropylmalate dehydratase large subunit from Vibrio vulnificus (strain YJ016).